Reading from the N-terminus, the 122-residue chain is Large ribosomal subunit protein uL14 (122 aa).

The protein belongs to the universal ribosomal protein uL14 family. As to quaternary structure, part of the 50S ribosomal subunit. Forms a cluster with proteins L3 and L19. In the 70S ribosome, L14 and L19 interact and together make contacts with the 16S rRNA in bridges B5 and B8.

Its function is as follows. Binds to 23S rRNA. Forms part of two intersubunit bridges in the 70S ribosome. The protein is Large ribosomal subunit protein uL14 of Acinetobacter baumannii (strain AB307-0294).